We begin with the raw amino-acid sequence, 312 residues long: Probable deoxyhypusine synthase (312 aa).

K285 serves as the catalytic Nucleophile.

It belongs to the deoxyhypusine synthase family. The cofactor is NAD(+).

It carries out the reaction [eIF5A protein]-L-lysine + spermidine = [eIF5A protein]-deoxyhypusine + propane-1,3-diamine. It participates in protein modification; eIF5A hypusination. Catalyzes the NAD-dependent oxidative cleavage of spermidine and the subsequent transfer of the butylamine moiety of spermidine to the epsilon-amino group of a specific lysine residue of the eIF-5A precursor protein to form the intermediate deoxyhypusine residue. This Saccharolobus islandicus (strain Y.N.15.51 / Yellowstone #2) (Sulfolobus islandicus) protein is Probable deoxyhypusine synthase.